Here is a 303-residue protein sequence, read N- to C-terminus: Cyclin-dependent kinase 1 (303 aa).

The region spanning 4–287 (YVKIEKIGEG…AREAMTHPYF (284 aa)) is the Protein kinase domain. ATP-binding positions include 10–18 (IGEGTYGVV) and Lys33. Residue Thr14 is modified to Phosphothreonine. Tyr15 carries the phosphotyrosine; by wee1 and wee2 modification. The active-site Proton acceptor is Asp128. Thr161 is modified (phosphothreonine; by cak).

It belongs to the protein kinase superfamily. CMGC Ser/Thr protein kinase family. CDC2/CDKX subfamily. In terms of assembly, forms a stable but non-covalent complex with cyclin B in mature oocytes. Post-translationally, phosphorylation at Tyr-15 by wee1 and wee2 inhibits the protein kinase activity and acts negative regulator of entry into mitosis (G2 to M transition).

The protein localises to the nucleus. Its subcellular location is the cytoplasm. It is found in the cytoskeleton. It localises to the microtubule organizing center. The protein resides in the centrosome. It carries out the reaction L-seryl-[protein] + ATP = O-phospho-L-seryl-[protein] + ADP + H(+). It catalyses the reaction L-threonyl-[protein] + ATP = O-phospho-L-threonyl-[protein] + ADP + H(+). The enzyme catalyses [DNA-directed RNA polymerase] + ATP = phospho-[DNA-directed RNA polymerase] + ADP + H(+). Phosphorylation at Thr-14 or Tyr-15 inactivates the enzyme, while phosphorylation at Thr-161 activates it. In terms of biological role, plays a key role in the control of the eukaryotic cell cycle by modulating the centrosome cycle as well as mitotic onset; promotes G2-M transition via association with multiple interphase cyclins. During G2 and early mitosis, CDC25A/B/C-mediated dephosphorylation activates CDK1/cyclin complexes which phosphorylate several substrates that trigger at least centrosome separation, Golgi dynamics, nuclear envelope breakdown and chromosome condensation. Once chromosomes are condensed and aligned at the metaphase plate, CDK1 activity is switched off by WEE1- and PKMYT1-mediated phosphorylation to allow sister chromatid separation, chromosome decondensation, reformation of the nuclear envelope and cytokinesis. Catalyzes lamin (LMNA, LMNB1 and LMNB2) phosphorylation at the onset of mitosis, promoting nuclear envelope breakdown. The chain is Cyclin-dependent kinase 1 (cdk1) from Oryzias latipes (Japanese rice fish).